A 223-amino-acid polypeptide reads, in one-letter code: Endonuclease V (223 aa).

Mg(2+) is bound by residues Asp35 and Asp103.

This sequence belongs to the endonuclease V family. Mg(2+) is required as a cofactor.

The protein localises to the cytoplasm. The catalysed reaction is Endonucleolytic cleavage at apurinic or apyrimidinic sites to products with a 5'-phosphate.. DNA repair enzyme involved in the repair of deaminated bases. Selectively cleaves double-stranded DNA at the second phosphodiester bond 3' to a deoxyinosine leaving behind the intact lesion on the nicked DNA. The sequence is that of Endonuclease V from Cronobacter sakazakii (strain ATCC BAA-894) (Enterobacter sakazakii).